The primary structure comprises 240 residues: Ribonuclease 3 (240 aa).

The region spanning 9-141 is the RNase III domain; that stretch reads VEELQKRLGV…LLAALYLDQG (133 aa). Glu-54 provides a ligand contact to Mg(2+). Asp-58 is a catalytic residue. Mg(2+)-binding residues include Asp-127 and Glu-130. Residue Glu-130 is part of the active site. One can recognise a DRBM domain in the interval 168 to 237; the sequence is DYKTALQEIV…ARKAYEKLVA (70 aa).

Belongs to the ribonuclease III family. As to quaternary structure, homodimer. The cofactor is Mg(2+).

The protein resides in the cytoplasm. The enzyme catalyses Endonucleolytic cleavage to 5'-phosphomonoester.. In terms of biological role, digests double-stranded RNA. Involved in the processing of primary rRNA transcript to yield the immediate precursors to the large and small rRNAs (23S and 16S). Processes some mRNAs, and tRNAs when they are encoded in the rRNA operon. Processes pre-crRNA and tracrRNA of type II CRISPR loci if present in the organism. This Thermotoga neapolitana (strain ATCC 49049 / DSM 4359 / NBRC 107923 / NS-E) protein is Ribonuclease 3.